A 258-amino-acid chain; its full sequence is UPF0246 protein YE0603 (258 aa).

Belongs to the UPF0246 family.

In Yersinia enterocolitica serotype O:8 / biotype 1B (strain NCTC 13174 / 8081), this protein is UPF0246 protein YE0603.